The sequence spans 494 residues: Cytochrome P450 2A5 (494 aa).

At Ser-131 the chain carries Phosphoserine. Lys-379 bears the N6-acetyllysine mark. Heme is bound at residue Cys-439.

This sequence belongs to the cytochrome P450 family. Heme is required as a cofactor. In terms of tissue distribution, liver, with a strong circadian rhythmicity. Circadian expression is regulated by DBP.

It is found in the endoplasmic reticulum membrane. Its subcellular location is the microsome membrane. It carries out the reaction an organic molecule + reduced [NADPH--hemoprotein reductase] + O2 = an alcohol + oxidized [NADPH--hemoprotein reductase] + H2O + H(+). Functionally, exhibits a high coumarin 7-hydroxylase activity. The sequence is that of Cytochrome P450 2A5 (Cyp2a5) from Mus musculus (Mouse).